A 103-amino-acid chain; its full sequence is Large ribosomal subunit protein bL21 (103 aa).

The protein belongs to the bacterial ribosomal protein bL21 family. As to quaternary structure, part of the 50S ribosomal subunit. Contacts protein L20.

Its function is as follows. This protein binds to 23S rRNA in the presence of protein L20. The protein is Large ribosomal subunit protein bL21 of Salmonella schwarzengrund (strain CVM19633).